The primary structure comprises 467 residues: Bifunctional protein GlmU (467 aa).

Residues 1-229 (MEKNTIILAA…FSESMGVNDR (229 aa)) form a pyrophosphorylase region. UDP-N-acetyl-alpha-D-glucosamine is bound by residues 8–11 (LAAG), Lys-22, Gln-72, 77–78 (GT), 100–102 (SGD), Gly-139, Glu-154, Asn-169, and Asn-227. Residue Asp-102 coordinates Mg(2+). Asn-227 is a binding site for Mg(2+). A linker region spans residues 230–250 (LALSKATKVMQRRINEEHMVN). An N-acetyltransferase region spans residues 251-467 (GVTIIDPENT…ALKAEEENNK (217 aa)). UDP-N-acetyl-alpha-D-glucosamine contacts are provided by Arg-332 and Lys-350. His-362 serves as the catalytic Proton acceptor. 2 residues coordinate UDP-N-acetyl-alpha-D-glucosamine: Tyr-365 and Asn-376. Acetyl-CoA is bound by residues 385–386 (NY), Ser-404, Ala-422, and Arg-439.

The protein in the N-terminal section; belongs to the N-acetylglucosamine-1-phosphate uridyltransferase family. This sequence in the C-terminal section; belongs to the transferase hexapeptide repeat family. In terms of assembly, homotrimer. Mg(2+) serves as cofactor.

The protein localises to the cytoplasm. The enzyme catalyses alpha-D-glucosamine 1-phosphate + acetyl-CoA = N-acetyl-alpha-D-glucosamine 1-phosphate + CoA + H(+). The catalysed reaction is N-acetyl-alpha-D-glucosamine 1-phosphate + UTP + H(+) = UDP-N-acetyl-alpha-D-glucosamine + diphosphate. It functions in the pathway nucleotide-sugar biosynthesis; UDP-N-acetyl-alpha-D-glucosamine biosynthesis; N-acetyl-alpha-D-glucosamine 1-phosphate from alpha-D-glucosamine 6-phosphate (route II): step 2/2. Its pathway is nucleotide-sugar biosynthesis; UDP-N-acetyl-alpha-D-glucosamine biosynthesis; UDP-N-acetyl-alpha-D-glucosamine from N-acetyl-alpha-D-glucosamine 1-phosphate: step 1/1. The protein operates within bacterial outer membrane biogenesis; LPS lipid A biosynthesis. Functionally, catalyzes the last two sequential reactions in the de novo biosynthetic pathway for UDP-N-acetylglucosamine (UDP-GlcNAc). The C-terminal domain catalyzes the transfer of acetyl group from acetyl coenzyme A to glucosamine-1-phosphate (GlcN-1-P) to produce N-acetylglucosamine-1-phosphate (GlcNAc-1-P), which is converted into UDP-GlcNAc by the transfer of uridine 5-monophosphate (from uridine 5-triphosphate), a reaction catalyzed by the N-terminal domain. The protein is Bifunctional protein GlmU of Pediococcus pentosaceus (strain ATCC 25745 / CCUG 21536 / LMG 10740 / 183-1w).